The chain runs to 38 residues: Phospholipase A2 2 (38 aa).

Positions 28, 30, and 32 each coordinate Ca(2+).

The protein belongs to the phospholipase A2 family. Group I subfamily. Ca(2+) serves as cofactor. Expressed by the venom gland.

It localises to the secreted. The enzyme catalyses a 1,2-diacyl-sn-glycero-3-phosphocholine + H2O = a 1-acyl-sn-glycero-3-phosphocholine + a fatty acid + H(+). Snake venom phospholipase A2 (PLA2) that inhibits neuromuscular transmission by blocking acetylcholine release from the nerve termini. PLA2 catalyzes the calcium-dependent hydrolysis of the 2-acyl groups in 3-sn-phosphoglycerides. The polypeptide is Phospholipase A2 2 (Calliophis bivirgatus (Blue Malaysian coral snake)).